The chain runs to 420 residues: uncharacterized protein (420 aa).

The next 6 membrane-spanning stretches (helical) occupy residues 26 to 46 (IFLL…QSVI), 66 to 86 (SAIK…WFTF), 231 to 251 (VILA…ATVL), 276 to 296 (IPVN…PSLL), 317 to 337 (GFLV…SIAF), and 369 to 389 (IDIL…FLTI).

It belongs to the CbiQ family.

It localises to the cell membrane. This is an uncharacterized protein from Mycoplasma genitalium (strain ATCC 33530 / DSM 19775 / NCTC 10195 / G37) (Mycoplasmoides genitalium).